A 224-amino-acid polypeptide reads, in one-letter code: UPF0758 protein Sde_3678 (224 aa).

Positions 102 to 224 (SLTSTTAVKQ…AVSFAERGWI (123 aa)) constitute an MPN domain. Zn(2+) contacts are provided by His-173, His-175, and Asp-186. A JAMM motif motif is present at residues 173–186 (HNHPSGIAEPSEPD).

Belongs to the UPF0758 family.

The polypeptide is UPF0758 protein Sde_3678 (Saccharophagus degradans (strain 2-40 / ATCC 43961 / DSM 17024)).